The sequence spans 296 residues: Glycine N-acyltransferase-like protein (296 aa).

The residue at position 41 (Lys-41) is an N6-acetyllysine; alternate. An N6-succinyllysine; alternate modification is found at Lys-41. At Lys-43 the chain carries N6-acetyllysine. Lys-48 bears the N6-acetyllysine; alternate mark. N6-succinyllysine; alternate is present on Lys-48. N6-acetyllysine is present on residues Lys-80 and Lys-83. 2 positions are modified to N6-acetyllysine; alternate: Lys-183 and Lys-256. Residues Lys-183 and Lys-256 each carry the N6-succinyllysine; alternate modification.

This sequence belongs to the glycine N-acyltransferase family.

It is found in the mitochondrion. The enzyme catalyses an acyl-CoA + glycine = an N-acylglycine + CoA + H(+). Its function is as follows. Mitochondrial acyltransferase which transfers the acyl group to the N-terminus of glycine. Can conjugate a multitude of substrates to form a variety of N-acylglycines. This Mus musculus (Mouse) protein is Glycine N-acyltransferase-like protein (Gm4952).